We begin with the raw amino-acid sequence, 881 residues long: Valine--tRNA ligase (881 aa).

The 'HIGH' region signature appears at Pro-49 to His-59. The 'KMSKS' region signature appears at Lys-526–Ser-530. Lys-529 serves as a coordination point for ATP. Residues Leu-810–Lys-881 adopt a coiled-coil conformation.

Belongs to the class-I aminoacyl-tRNA synthetase family. ValS type 1 subfamily. In terms of assembly, monomer.

It is found in the cytoplasm. The enzyme catalyses tRNA(Val) + L-valine + ATP = L-valyl-tRNA(Val) + AMP + diphosphate. In terms of biological role, catalyzes the attachment of valine to tRNA(Val). As ValRS can inadvertently accommodate and process structurally similar amino acids such as threonine, to avoid such errors, it has a 'posttransfer' editing activity that hydrolyzes mischarged Thr-tRNA(Val) in a tRNA-dependent manner. This is Valine--tRNA ligase from Bacillus cereus (strain ATCC 10987 / NRS 248).